A 212-amino-acid polypeptide reads, in one-letter code: Pyridoxine/pyridoxamine 5'-phosphate oxidase (212 aa).

FMN contacts are provided by residues 57 to 62 (RMVLLK), 72 to 73 (YT), R78, K79, and Q101. Residue K62 coordinates substrate. Residues Y119, R123, and S127 each coordinate substrate. FMN contacts are provided by residues 136 to 137 (QS) and W181. Residue 187–189 (RLH) coordinates substrate. R191 is a binding site for FMN.

It belongs to the pyridoxamine 5'-phosphate oxidase family. Homodimer. The cofactor is FMN.

It catalyses the reaction pyridoxamine 5'-phosphate + O2 + H2O = pyridoxal 5'-phosphate + H2O2 + NH4(+). The catalysed reaction is pyridoxine 5'-phosphate + O2 = pyridoxal 5'-phosphate + H2O2. It functions in the pathway cofactor metabolism; pyridoxal 5'-phosphate salvage; pyridoxal 5'-phosphate from pyridoxamine 5'-phosphate: step 1/1. It participates in cofactor metabolism; pyridoxal 5'-phosphate salvage; pyridoxal 5'-phosphate from pyridoxine 5'-phosphate: step 1/1. Catalyzes the oxidation of either pyridoxine 5'-phosphate (PNP) or pyridoxamine 5'-phosphate (PMP) into pyridoxal 5'-phosphate (PLP). This Erythrobacter litoralis (strain HTCC2594) protein is Pyridoxine/pyridoxamine 5'-phosphate oxidase.